Reading from the N-terminus, the 413-residue chain is Multidrug resistance protein MdtA (413 aa).

An N-terminal signal peptide occupies residues 1–25 (MKNKRRTYFFQFAVLAVVIATAYFA). Residues 394-413 (ANTYDQMDKSKPSNSKVENT) are disordered.

This sequence belongs to the membrane fusion protein (MFP) (TC 8.A.1) family. Part of a tripartite efflux system composed of MdtA, MdtB and MdtC.

The protein localises to the cell inner membrane. The polypeptide is Multidrug resistance protein MdtA (Xenorhabdus bovienii (strain SS-2004) (Xenorhabdus nematophila subsp. bovienii)).